The chain runs to 227 residues: ATP synthase F(0) complex subunit a (227 aa).

6 consecutive transmembrane segments (helical) span residues 14 to 34 (LLGIPLILLSLLFPTLLLPSP), 69 to 89 (WALILTSLMTFLLLINLLGLL), 98 to 118 (QLSMNMALAFPLWLATLLTGL), 139 to 159 (IPALILIETTSLLIRPLALGV), 174 to 194 (LISTATLALLPTMPTISVLTA), and 196 to 216 (VLLLLTILELAVAMIQAYVFV).

It belongs to the ATPase A chain family. As to quaternary structure, component of the ATP synthase complex composed at least of ATP5F1A/subunit alpha, ATP5F1B/subunit beta, ATP5MC1/subunit c (homooctomer), MT-ATP6/subunit a, MT-ATP8/subunit 8, ATP5ME/subunit e, ATP5MF/subunit f, ATP5MG/subunit g, ATP5MK/subunit k, ATP5MJ/subunit j, ATP5F1C/subunit gamma, ATP5F1D/subunit delta, ATP5F1E/subunit epsilon, ATP5PF/subunit F6, ATP5PB/subunit b, ATP5PD/subunit d, ATP5PO/subunit OSCP. ATP synthase complex consists of a soluble F(1) head domain (subunits alpha(3) and beta(3)) - the catalytic core - and a membrane F(0) domain - the membrane proton channel (subunits c, a, 8, e, f, g, k and j). These two domains are linked by a central stalk (subunits gamma, delta, and epsilon) rotating inside the F1 region and a stationary peripheral stalk (subunits F6, b, d, and OSCP). Interacts with DNAJC30; interaction is direct.

It is found in the mitochondrion inner membrane. It catalyses the reaction H(+)(in) = H(+)(out). Functionally, subunit a, of the mitochondrial membrane ATP synthase complex (F(1)F(0) ATP synthase or Complex V) that produces ATP from ADP in the presence of a proton gradient across the membrane which is generated by electron transport complexes of the respiratory chain. ATP synthase complex consist of a soluble F(1) head domain - the catalytic core - and a membrane F(1) domain - the membrane proton channel. These two domains are linked by a central stalk rotating inside the F(1) region and a stationary peripheral stalk. During catalysis, ATP synthesis in the catalytic domain of F(1) is coupled via a rotary mechanism of the central stalk subunits to proton translocation. With the subunit c (ATP5MC1), forms the proton-conducting channel in the F(0) domain, that contains two crucial half-channels (inlet and outlet) that facilitate proton movement from the mitochondrial intermembrane space (IMS) into the matrix. Protons are taken up via the inlet half-channel and released through the outlet half-channel, following a Grotthuss mechanism. The sequence is that of ATP synthase F(0) complex subunit a from Struthio camelus (Common ostrich).